A 156-amino-acid chain; its full sequence is Myosin regulatory light chain, striated adductor muscle (156 aa).

Position 1 is a blocked amino end (Ala) (A1). 2 EF-hand domains span residues 15-50 (KQIQ…LGRT) and 84-119 (DSEE…MGDN). D28, D30, D32, and D39 together coordinate Ca(2+).

Its function is as follows. In molluscan muscle, calcium regulation is associated with myosin rather than with actin. Muscle myosin contains two types of light chains: the catalytic light chain, essential for ATPase activity, and the regulatory light chain, a calcium-binding protein responsible for Ca(2+) dependent binding and Ca(2+) dependent Mg-ATPase activity. In Chlamys nipponensis akazara (Akazara scallop), this protein is Myosin regulatory light chain, striated adductor muscle.